The following is a 495-amino-acid chain: Glutamate--tRNA ligase (495 aa).

Residues 12–22 (PSPTGHLHIGN) carry the 'HIGH' region motif. The 'KMSKS' region signature appears at 259–263 (KLSKR). Lys-262 serves as a coordination point for ATP.

Belongs to the class-I aminoacyl-tRNA synthetase family. Glutamate--tRNA ligase type 1 subfamily. As to quaternary structure, monomer.

It localises to the cytoplasm. The catalysed reaction is tRNA(Glu) + L-glutamate + ATP = L-glutamyl-tRNA(Glu) + AMP + diphosphate. In terms of biological role, catalyzes the attachment of glutamate to tRNA(Glu) in a two-step reaction: glutamate is first activated by ATP to form Glu-AMP and then transferred to the acceptor end of tRNA(Glu). The chain is Glutamate--tRNA ligase from Latilactobacillus sakei subsp. sakei (strain 23K) (Lactobacillus sakei subsp. sakei).